A 323-amino-acid chain; its full sequence is tRNA dimethylallyltransferase (323 aa).

12-19 is a binding site for ATP; the sequence is GPTAAGKT. A substrate-binding site is contributed by 14–19; that stretch reads TAAGKT. Interaction with substrate tRNA stretches follow at residues 37-40 and 161-165; these read DSAL and QRLMR.

It belongs to the IPP transferase family. Monomer. The cofactor is Mg(2+).

The catalysed reaction is adenosine(37) in tRNA + dimethylallyl diphosphate = N(6)-dimethylallyladenosine(37) in tRNA + diphosphate. In terms of biological role, catalyzes the transfer of a dimethylallyl group onto the adenine at position 37 in tRNAs that read codons beginning with uridine, leading to the formation of N6-(dimethylallyl)adenosine (i(6)A). This chain is tRNA dimethylallyltransferase, found in Pseudomonas aeruginosa (strain LESB58).